The following is a 66-amino-acid chain: Cold shock-like protein CspD (66 aa).

The region spanning 4 to 63 is the CSD domain; sequence GKVKWFNSEKGFGFIEVEGGDDVFVHFSAIQGDGFKTLEEGQEVSFEIVEGNRGPQAANV.

Homodimer.

The protein localises to the cytoplasm. This is Cold shock-like protein CspD (cspD) from Bacillus anthracis.